The sequence spans 338 residues: Tetraacyldisaccharide 4'-kinase (338 aa).

An ATP-binding site is contributed by 53 to 60; the sequence is VAGGAGKT.

This sequence belongs to the LpxK family.

It catalyses the reaction a lipid A disaccharide + ATP = a lipid IVA + ADP + H(+). It participates in glycolipid biosynthesis; lipid IV(A) biosynthesis; lipid IV(A) from (3R)-3-hydroxytetradecanoyl-[acyl-carrier-protein] and UDP-N-acetyl-alpha-D-glucosamine: step 6/6. Its function is as follows. Transfers the gamma-phosphate of ATP to the 4'-position of a tetraacyldisaccharide 1-phosphate intermediate (termed DS-1-P) to form tetraacyldisaccharide 1,4'-bis-phosphate (lipid IVA). The polypeptide is Tetraacyldisaccharide 4'-kinase (Polaromonas sp. (strain JS666 / ATCC BAA-500)).